We begin with the raw amino-acid sequence, 557 residues long: MCGILAVHHVAEDIEAFKPKALHLSKQLRHRGPDWSGKAIRNQTILCHERLAIVGVESGAQPLVSDDGKLVLTVNGEIYNHLKLRENLKGNYKFKTYSDCEVILYLYREHGPACANMLDGMFSWVLYDQDKDKVVAARDPIGITTLYQGFSSDSPDTAYFASELKALHPVCDKIIAFPPGHYYDSETKQTVRYFKPSWWDENKIPSNPVDYKLLRETLEASVRKRLMAEVPYGVLLSGGLDSSLIASIAARETEKLANSTSQSEEARTITAWPKLHSFAIGLPGSPDLLAARKVADFLHTFHHEHTFTIDEGLDALRDVIYHLETYDVTTIRASTPMYLLSRKIKAQGVKMVLSGEGSDEIFGGYLYFGNAPSREAFHSECVRRVKNLHLSDCLRANKSTMAWGLEARVPFLDKDFLEVALNIDPEEKMYINGRKEKYILRKAFDTTHDSSLQPYLPQDILWRQKEQFSDGVGYSWIDALKDTAELCISDDEFALPRREWGDDIPTTKEAFWYRKLFDEIFPRQCADTVMRWVPKAEWGCPEDPSGRYQAGHVAALK.

Cys2 (for GATase activity) is an active-site residue. In terms of domain architecture, Glutamine amidotransferase type-2 spans 2–188 (CGILAVHHVA…PGHYYDSETK (187 aa)). L-glutamine contacts are provided by residues 50-54 (RLAIV), 75-77 (NGE), and Asp99. The Asparagine synthetase domain maps to 196-531 (PSWWDENKIP…PRQCADTVMR (336 aa)). ATP is bound by residues Leu235, Ile280, and 354 to 355 (SG). Phosphoserine occurs at positions 391 and 489.

The protein resides in the cytoplasm. The protein localises to the nucleus. The enzyme catalyses L-aspartate + L-glutamine + ATP + H2O = L-asparagine + L-glutamate + AMP + diphosphate + H(+). It participates in amino-acid biosynthesis; L-asparagine biosynthesis; L-asparagine from L-aspartate (L-Gln route): step 1/1. The chain is Probable asparagine synthetase [glutamine-hydrolyzing] (asn1) from Schizosaccharomyces pombe (strain 972 / ATCC 24843) (Fission yeast).